Here is a 208-residue protein sequence, read N- to C-terminus: Exosome complex component CSL4 homolog (208 aa).

In terms of assembly, component of the RNA exosome complex. As to expression, ubiquitously expressed.

The protein resides in the nucleus. Its subcellular location is the nucleolus. It is found in the nucleoplasm. In terms of biological role, non-catalytic component of the RNA exosome complex which has 3'-&gt;5' exoribonuclease activity and participates in a multitude of cellular RNA processing and degradation events. Involved in regulation of antisense ribosomal siRNA production. Involved in response to cold-warm shock. The sequence is that of Exosome complex component CSL4 homolog from Caenorhabditis elegans.